The chain runs to 338 residues: MIDKIIILYFYGDMRMNRKRTPRVDTLEAVANVLRAYRELFEGNLIKALYYVDKALELEPDFYLALFLKGLALSAKGEIKEAITTFEELLSYESKNPITWVFVGQLYGMSGNCDEALKCYNKALGIENRFLSAFLLKTICLEFLGEYDELLKCYNEVLTYTPNFVPMWVKKAEILRKLGRYEDALLCLNRALELKPHDKNALYLKGVLLKRMGKFREALECFKKLIDELNVKWIDAIRHAVSLMLALDDLKDAERYINIGLEIRKDDVALWYFKGELYERLGKLDEALKCYEKVIELQPHYIKALLSKARIYERQGNIEAAIEYYNKAVENIHKDHGE.

TPR repeat units lie at residues 27-62 (LEAVANVLRAYRELFEGNLIKALYYVDKALELEPDF), 63-96 (YLALFLKGLALSAKGEIKEAITTFEELLSYESKN), 97-130 (PITWVFVGQLYGMSGNCDEALKCYNKALGIENRF), 131-164 (LSAFLLKTICLEFLGEYDELLKCYNEVLTYTPNF), 165-198 (VPMWVKKAEILRKLGRYEDALLCLNRALELKPHD), 199-232 (KNALYLKGVLLKRMGKFREALECFKKLIDELNVK), 268-301 (VALWYFKGELYERLGKLDEALKCYEKVIELQPHY), and 302-335 (IKALLSKARIYERQGNIEAAIEYYNKAVENIHKD).

In Methanocaldococcus jannaschii (strain ATCC 43067 / DSM 2661 / JAL-1 / JCM 10045 / NBRC 100440) (Methanococcus jannaschii), this protein is TPR repeat-containing protein MJ0941.